Consider the following 426-residue polypeptide: Cytochrome b-c1 complex subunit 2, mitochondrial (426 aa).

A mitochondrion-targeting transit peptide spans 1–30; that stretch reads MKSFTRNLRRFQTPRRNLHGISYTPKKVEG.

Belongs to the peptidase M16 family. UQCRC2/QCR2 subfamily. As to quaternary structure, component of the ubiquinol-cytochrome c oxidoreductase (cytochrome b-c1 complex, complex III, CIII), a multisubunit enzyme composed of 3 respiratory subunits cytochrome b, cytochrome c1 and Rieske protein, 2 core protein subunits, and additional low-molecular weight protein subunits. The complex exists as an obligatory dimer and forms supercomplexes (SCs) in the inner mitochondrial membrane with cytochrome c oxidase (complex IV, CIV).

Its subcellular location is the mitochondrion inner membrane. Component of the ubiquinol-cytochrome c oxidoreductase, a multisubunit transmembrane complex that is part of the mitochondrial electron transport chain which drives oxidative phosphorylation. The respiratory chain contains 3 multisubunit complexes succinate dehydrogenase (complex II, CII), ubiquinol-cytochrome c oxidoreductase (cytochrome b-c1 complex, complex III, CIII) and cytochrome c oxidase (complex IV, CIV), that cooperate to transfer electrons derived from NADH and succinate to molecular oxygen, creating an electrochemical gradient over the inner membrane that drives transmembrane transport and the ATP synthase. The cytochrome b-c1 complex catalyzes electron transfer from ubiquinol to cytochrome c, linking this redox reaction to translocation of protons across the mitochondrial inner membrane, with protons being carried across the membrane as hydrogens on the quinol. In the process called Q cycle, 2 protons are consumed from the matrix, 4 protons are released into the intermembrane space and 2 electrons are passed to cytochrome c. The sequence is that of Cytochrome b-c1 complex subunit 2, mitochondrial (qcr2) from Schizosaccharomyces pombe (strain 972 / ATCC 24843) (Fission yeast).